The chain runs to 191 residues: Holliday junction branch migration complex subunit RuvA (191 aa).

Residues 1–64 are domain I; it reads MIGRLSGVLL…EDAHILFGFG (64 aa). The interval 65-137 is domain II; that stretch reads TNEERNVFKQ…LKGKLGADLG (73 aa). Residues 137–141 form a flexible linker region; the sequence is GVAGA. Residues 142 to 191 form a domain III region; it reads VATDATSDILNALLALGYSDKEAMLALKQVPAGTGVSDGIKLALKSLSKA.

The protein belongs to the RuvA family. Homotetramer. Forms an RuvA(8)-RuvB(12)-Holliday junction (HJ) complex. HJ DNA is sandwiched between 2 RuvA tetramers; dsDNA enters through RuvA and exits via RuvB. An RuvB hexamer assembles on each DNA strand where it exits the tetramer. Each RuvB hexamer is contacted by two RuvA subunits (via domain III) on 2 adjacent RuvB subunits; this complex drives branch migration. In the full resolvosome a probable DNA-RuvA(4)-RuvB(12)-RuvC(2) complex forms which resolves the HJ.

It localises to the cytoplasm. In terms of biological role, the RuvA-RuvB-RuvC complex processes Holliday junction (HJ) DNA during genetic recombination and DNA repair, while the RuvA-RuvB complex plays an important role in the rescue of blocked DNA replication forks via replication fork reversal (RFR). RuvA specifically binds to HJ cruciform DNA, conferring on it an open structure. The RuvB hexamer acts as an ATP-dependent pump, pulling dsDNA into and through the RuvAB complex. HJ branch migration allows RuvC to scan DNA until it finds its consensus sequence, where it cleaves and resolves the cruciform DNA. The protein is Holliday junction branch migration complex subunit RuvA of Janthinobacterium sp. (strain Marseille) (Minibacterium massiliensis).